Here is a 44-residue protein sequence, read N- to C-terminus: pyr operon leader peptide (44 aa).

The protein is pyr operon leader peptide (pyrL) of Shigella flexneri.